Reading from the N-terminus, the 337-residue chain is Glyceraldehyde-3-phosphate dehydrogenase (337 aa).

Residues 12–13 (RI), aspartate 34, and lysine 79 each bind NAD(+). D-glyceraldehyde 3-phosphate contacts are provided by residues 150-152 (SCT), threonine 181, 210-211 (TG), and arginine 233. The Nucleophile role is filled by cysteine 151. Asparagine 315 lines the NAD(+) pocket.

The protein belongs to the glyceraldehyde-3-phosphate dehydrogenase family. As to quaternary structure, homotetramer.

It localises to the cytoplasm. It catalyses the reaction D-glyceraldehyde 3-phosphate + phosphate + NAD(+) = (2R)-3-phospho-glyceroyl phosphate + NADH + H(+). The protein operates within carbohydrate degradation; glycolysis; pyruvate from D-glyceraldehyde 3-phosphate: step 1/5. The polypeptide is Glyceraldehyde-3-phosphate dehydrogenase (GPD) (Phanerodontia chrysosporium (White-rot fungus)).